Reading from the N-terminus, the 304-residue chain is MIRQRTLKNTIRATGVGLHSGEKVYLTLKPAPVDTGIIFRRTDLDPMVEIRACAENVGETMLSTTLVKDGVRVATVEHLLSAMAGLGIDNCFVELSAAEVPIMDGSAGPFVFLLQSAGISEQEAAKRFIRIKREVTVEEGDKKATFLPFEGFKVSFGIDFDHPVFKGRAQTATVDFSSTSFVKEVSRARTFGFMRDIEKLRAMNLALGGSVDNAIVVDDYKILNEDGLRYDDEFVKHKVLDAIGDLYLLGNSLIGEFRGIKSGHDLNNKLLRKLRAEEDAWEVVTFDDEATAPISYMKPVLAAG.

Residues H78, H237, and D241 each coordinate Zn(2+). H264 (proton donor) is an active-site residue.

It belongs to the LpxC family. Requires Zn(2+) as cofactor.

It catalyses the reaction a UDP-3-O-[(3R)-3-hydroxyacyl]-N-acetyl-alpha-D-glucosamine + H2O = a UDP-3-O-[(3R)-3-hydroxyacyl]-alpha-D-glucosamine + acetate. The protein operates within glycolipid biosynthesis; lipid IV(A) biosynthesis; lipid IV(A) from (3R)-3-hydroxytetradecanoyl-[acyl-carrier-protein] and UDP-N-acetyl-alpha-D-glucosamine: step 2/6. Functionally, catalyzes the hydrolysis of UDP-3-O-myristoyl-N-acetylglucosamine to form UDP-3-O-myristoylglucosamine and acetate, the committed step in lipid A biosynthesis. This is UDP-3-O-acyl-N-acetylglucosamine deacetylase from Marinobacter nauticus (strain ATCC 700491 / DSM 11845 / VT8) (Marinobacter aquaeolei).